The sequence spans 117 residues: Large ribosomal subunit protein uL18 (117 aa).

Belongs to the universal ribosomal protein uL18 family. As to quaternary structure, part of the 50S ribosomal subunit; part of the 5S rRNA/L5/L18/L25 subcomplex. Contacts the 5S and 23S rRNAs.

This is one of the proteins that bind and probably mediate the attachment of the 5S RNA into the large ribosomal subunit, where it forms part of the central protuberance. The protein is Large ribosomal subunit protein uL18 of Methylobacillus flagellatus (strain ATCC 51484 / DSM 6875 / VKM B-1610 / KT).